A 171-amino-acid chain; its full sequence is Crossover junction endodeoxyribonuclease RuvC (171 aa).

Residues D7, E66, and D138 contribute to the active site. Mg(2+)-binding residues include D7, E66, and D138.

This sequence belongs to the RuvC family. As to quaternary structure, homodimer which binds Holliday junction (HJ) DNA. The HJ becomes 2-fold symmetrical on binding to RuvC with unstacked arms; it has a different conformation from HJ DNA in complex with RuvA. In the full resolvosome a probable DNA-RuvA(4)-RuvB(12)-RuvC(2) complex forms which resolves the HJ. It depends on Mg(2+) as a cofactor.

Its subcellular location is the cytoplasm. It carries out the reaction Endonucleolytic cleavage at a junction such as a reciprocal single-stranded crossover between two homologous DNA duplexes (Holliday junction).. The RuvA-RuvB-RuvC complex processes Holliday junction (HJ) DNA during genetic recombination and DNA repair. Endonuclease that resolves HJ intermediates. Cleaves cruciform DNA by making single-stranded nicks across the HJ at symmetrical positions within the homologous arms, yielding a 5'-phosphate and a 3'-hydroxyl group; requires a central core of homology in the junction. The consensus cleavage sequence is 5'-(A/T)TT(C/G)-3'. Cleavage occurs on the 3'-side of the TT dinucleotide at the point of strand exchange. HJ branch migration catalyzed by RuvA-RuvB allows RuvC to scan DNA until it finds its consensus sequence, where it cleaves and resolves the cruciform DNA. The protein is Crossover junction endodeoxyribonuclease RuvC of Francisella tularensis subsp. holarctica (strain FTNF002-00 / FTA).